Consider the following 572-residue polypeptide: Dihydroxy-acid dehydratase (572 aa).

D78 is a Mg(2+) binding site. Position 119 (C119) interacts with [2Fe-2S] cluster. Positions 120 and 121 each coordinate Mg(2+). K121 bears the N6-carboxylysine mark. C192 is a [2Fe-2S] cluster binding site. E459 provides a ligand contact to Mg(2+). S485 (proton acceptor) is an active-site residue.

It belongs to the IlvD/Edd family. In terms of assembly, homodimer. It depends on [2Fe-2S] cluster as a cofactor. Requires Mg(2+) as cofactor.

The enzyme catalyses (2R)-2,3-dihydroxy-3-methylbutanoate = 3-methyl-2-oxobutanoate + H2O. The catalysed reaction is (2R,3R)-2,3-dihydroxy-3-methylpentanoate = (S)-3-methyl-2-oxopentanoate + H2O. The protein operates within amino-acid biosynthesis; L-isoleucine biosynthesis; L-isoleucine from 2-oxobutanoate: step 3/4. Its pathway is amino-acid biosynthesis; L-valine biosynthesis; L-valine from pyruvate: step 3/4. Functions in the biosynthesis of branched-chain amino acids. Catalyzes the dehydration of (2R,3R)-2,3-dihydroxy-3-methylpentanoate (2,3-dihydroxy-3-methylvalerate) into 2-oxo-3-methylpentanoate (2-oxo-3-methylvalerate) and of (2R)-2,3-dihydroxy-3-methylbutanoate (2,3-dihydroxyisovalerate) into 2-oxo-3-methylbutanoate (2-oxoisovalerate), the penultimate precursor to L-isoleucine and L-valine, respectively. The sequence is that of Dihydroxy-acid dehydratase from Helicobacter hepaticus (strain ATCC 51449 / 3B1).